We begin with the raw amino-acid sequence, 43 residues long: Iota-conotoxin-like Fi11.6 (43 aa).

4 disulfides stabilise this stretch: Cys2/Cys16, Cys9/Cys19, Cys15/Cys24, and Cys18/Cys35. Pro8 carries the 4-hydroxyproline modification. Position 26 is a 4-hydroxyproline (Pro26). Trp30 carries the 6'-bromotryptophan modification. Phe41 carries the D-phenylalanine modification.

The protein belongs to the conotoxin I1 superfamily. As to expression, expressed by the venom duct.

The protein resides in the secreted. Its function is as follows. Iota-conotoxins bind to voltage-gated sodium channels (Nav) and act as agonists by shifting the voltage-dependence of activation to more hyperpolarized levels. Produces general excitatory symptoms. The polypeptide is Iota-conotoxin-like Fi11.6 (Conus figulinus (Fig cone)).